Consider the following 193-residue polypeptide: Adenylate kinase (193 aa).

10–18 (GVPGVGGTT) contacts ATP.

It belongs to the archaeal adenylate kinase family. Monomer.

It is found in the cytoplasm. It catalyses the reaction AMP + ATP = 2 ADP. This chain is Adenylate kinase, found in Methanococcus aeolicus (strain ATCC BAA-1280 / DSM 17508 / OCM 812 / Nankai-3).